The sequence spans 293 residues: MDQQALDKAAVLAEALPYIREFSGKTVVIKYGGAAMAAADLKAAVMQDIALMKYVGMHPIVVHGGGPEVSELARRMGIEPQFVDGLRVTDAATMEIAQMVLVGKTNREIVTHLCAQGVKAVGLSGQDAGLIRAARHLHRSRETGEMVDLGFVGDVAAVDTEVLTTLTTAGYVPVIAPIGVGPGGQPYNINADTVAGAIAAAMKAEKLVLLTDVEGVRADKDDPSSLLSRVTAQEVKSWIARGRLQGGMIPKLQCCLTALEGGVNRVHIIDGRVPHSLLLEIFTDEGVGTMVVK.

Residues 65–66, arginine 87, and asparagine 188 each bind substrate; that span reads GG.

The protein belongs to the acetylglutamate kinase family. ArgB subfamily.

The protein localises to the cytoplasm. The enzyme catalyses N-acetyl-L-glutamate + ATP = N-acetyl-L-glutamyl 5-phosphate + ADP. It participates in amino-acid biosynthesis; L-arginine biosynthesis; N(2)-acetyl-L-ornithine from L-glutamate: step 2/4. In terms of biological role, catalyzes the ATP-dependent phosphorylation of N-acetyl-L-glutamate. The chain is Acetylglutamate kinase from Symbiobacterium thermophilum (strain DSM 24528 / JCM 14929 / IAM 14863 / T).